A 323-amino-acid chain; its full sequence is Beta-ketoacyl-[acyl-carrier-protein] synthase III (323 aa).

Residues C114 and H250 contribute to the active site. Residues 251 to 255 (QANRR) are ACP-binding. Residue N280 is part of the active site.

It belongs to the thiolase-like superfamily. FabH family. As to quaternary structure, homodimer.

It localises to the cytoplasm. The catalysed reaction is malonyl-[ACP] + acetyl-CoA + H(+) = 3-oxobutanoyl-[ACP] + CO2 + CoA. Its pathway is lipid metabolism; fatty acid biosynthesis. In terms of biological role, catalyzes the condensation reaction of fatty acid synthesis by the addition to an acyl acceptor of two carbons from malonyl-ACP. Catalyzes the first condensation reaction which initiates fatty acid synthesis and may therefore play a role in governing the total rate of fatty acid production. Possesses both acetoacetyl-ACP synthase and acetyl transacylase activities. Its substrate specificity determines the biosynthesis of branched-chain and/or straight-chain of fatty acids. In Rhodospirillum centenum (strain ATCC 51521 / SW), this protein is Beta-ketoacyl-[acyl-carrier-protein] synthase III.